We begin with the raw amino-acid sequence, 2615 residues long: Collagen alpha-5(VI) chain (2615 aa).

The signal sequence occupies residues 1–18 (MKILLIIFVLIIWTETLA). The interval 19-1394 (DQSPGPGPVY…TCCCTFCKCP (1376 aa)) is nonhelical region. 7 VWFA domains span residues 30 to 209 (DVVF…IKDV), 236 to 413 (DLVF…LKKL), 442 to 612 (DIHF…KNEV), 628 to 797 (DIMF…ERKL), 814 to 987 (DVVF…FTLV), 1005 to 1178 (DVIF…KKRI), and 1194 to 1376 (DIVV…KLSQ). Asparagine 201 and asparagine 260 each carry an N-linked (GlcNAc...) asparagine glycan. N-linked (GlcNAc...) asparagine glycosylation is present at asparagine 835. 6 consecutive Collagen-like domains span residues 1395–1446 (GIPG…GCPG), 1434–1490 (GPQG…KGDP), 1464–1520 (GDDG…PGQN), 1524–1580 (KGQK…TLGA), 1579–1629 (GAEG…LGKK), and 1674–1729 (GDAG…MAGQ). Residues 1395–1728 (GIPGPHGTRG…GQRGIKGMAG (334 aa)) form a triple-helical region region. The segment at 1404–1693 (GLQAMKGSQG…NPGIPGGPGP (290 aa)) is disordered. The Cell attachment site motif lies at 1430–1432 (RGD). Over residues 1511-1522 (PGDPGNPGQNNN) the composition is skewed to low complexity. 2 stretches are compositionally biased toward low complexity: residues 1601–1611 (SQGQKGPQGSP) and 1622–1641 (RPGLLGKKGEPGLPGDLGPV). Positions 1729–2615 (QPVYSQCDLI…EDKEMEATDI (887 aa)) are nonhelical region. VWFA domains lie at 1758–1965 (ELVF…MDVV), 1963–2154 (DVVF…AKFL), and 2291–2487 (DVAF…VKPF). Asparagine 2509 carries N-linked (GlcNAc...) asparagine glycosylation.

Belongs to the type VI collagen family. As to quaternary structure, trimers composed of three different chains: alpha-1(VI), alpha-2(VI), and alpha-3(VI) or alpha-5(VI) or alpha-6(VI). In terms of processing, prolines at the third position of the tripeptide repeating unit (G-X-Y) are hydroxylated in some or all of the chains. Expressed in skin, followed by lung, small intestine, colon and testis. In skin, it is expressed in the epidermis with strongest staining in suprabasal viable layers. In ATOD patients, it is absent in the most differentiated upper spinous and granular layers (at protein level).

It localises to the secreted. Its subcellular location is the extracellular space. The protein localises to the extracellular matrix. Its function is as follows. Collagen VI acts as a cell-binding protein. The chain is Collagen alpha-5(VI) chain (COL6A5) from Homo sapiens (Human).